A 570-amino-acid polypeptide reads, in one-letter code: Proline--tRNA ligase (570 aa).

The protein belongs to the class-II aminoacyl-tRNA synthetase family. ProS type 1 subfamily. In terms of assembly, homodimer.

The protein resides in the cytoplasm. The enzyme catalyses tRNA(Pro) + L-proline + ATP = L-prolyl-tRNA(Pro) + AMP + diphosphate. Its function is as follows. Catalyzes the attachment of proline to tRNA(Pro) in a two-step reaction: proline is first activated by ATP to form Pro-AMP and then transferred to the acceptor end of tRNA(Pro). As ProRS can inadvertently accommodate and process non-cognate amino acids such as alanine and cysteine, to avoid such errors it has two additional distinct editing activities against alanine. One activity is designated as 'pretransfer' editing and involves the tRNA(Pro)-independent hydrolysis of activated Ala-AMP. The other activity is designated 'posttransfer' editing and involves deacylation of mischarged Ala-tRNA(Pro). The misacylated Cys-tRNA(Pro) is not edited by ProRS. This is Proline--tRNA ligase from Neisseria meningitidis serogroup B (strain ATCC BAA-335 / MC58).